Here is a 1035-residue protein sequence, read N- to C-terminus: MSGSYPFIDIAALDSVREGFARGDAQLVLAHDLSTVLWVNGPGAKLFGYNRVEDLIEGQLDLPVATRRQIAAFSSENTSAPSAVAVRLGGGLRSELTHLHVSNIKLPDGVAALLVATQMPDNSAEAAISGLGDDSTHIALVDAVGKVVAASPRFALLDISASTLEDLIVEAGDATDRIVKRRIRTGSHSVPGAIARLTDTPALHLLCIVGDAPAQFQTAAEAVPLPDNAEAVLEEILPEQGDAPAQQAQKTHAEQPRPKTFAFDHDAPPARFIWKVGPDGTFSEISPDLAAVVGPNSADIVGRRFSDVANVFGFYTDGSIAALLLERDTWSGKRLLWPVEGTRLRVPVELAALPVYSRDREFLGFRGFGIVRPAEAEADPEEIGLALAGGIPQNRKPRKEPAETARMVGEDDVLALSEEVANDDQPAAVLPKPPLDITPTPGRRDSDKVISLLNSCAQEKVAADQAKFLKEKERATRPEGGLTKTERNAFREIAERLRKQGLANTRAESETPVSETSSIEPVEPTPPVKTRSEPIQPDETALLANLPVPVIIHSGDAIHYVNQALLDITGYESLDDIRSAGGVDVLFNSESDDGETRQSMVLRHADGSEEPVDAHLNAIAWRGGRALMLSLMPVTAADLPAPAELPAANDEEKQALEAHVEELKTILDTATDGVVLIDPEGRIRSMNHSASALFGYERDEAEGKFFSMLFAIESQRAAMDYLHGLSGNGVLSVLNDGREVIGREAKGGFIPLFMTIGKLPHTRGFCAVLRDITQWKRTEEELTNARKEAERASNQKTEFLARISHEIRTPLNAIIGFSELMADEKFGPIGNDRYRDYLRDINRSGNYVLALVNDLLDISKIEAGALDMQFEAVSLNDAIGEAIALMQPQANRERVIIRSSFQSNLPDIVADSRSIKQVALNLLSNAVRFTAPGGQVIVSTSYELNGDVVMRVRDTGIGMSKSEVEQALKPFRQINALEGRKAESAKDWRNEGTGLGLPLTKAMVEANRAQFAIDSNPGQGTVVEIVFPPTRVLAD.

Positions 1-613 (MSGSYPFIDI…HADGSEEPVD (613 aa)) are important for polar localization. A disordered region spans residues 500–533 (QGLANTRAESETPVSETSSIEPVEPTPPVKTRSE). An interaction with DivK region spans residues 614 to 1035 (AHLNAIAWRG…VFPPTRVLAD (422 aa)). Residues 659–730 (HVEELKTILD…YLHGLSGNGV (72 aa)) enclose the PAS domain. Residues 802-1031 (RISHEIRTPL…VVEIVFPPTR (230 aa)) form the Histidine kinase domain. The residue at position 805 (His-805) is a Phosphohistidine; by autocatalysis.

Interacts with DivK.

The protein localises to the cytoplasm. It carries out the reaction ATP + protein L-histidine = ADP + protein N-phospho-L-histidine.. In terms of biological role, functions as a polar differentiation marker. Essential protein that, by localizing in the old pole of dividing cells, controls cell division and maturation, probably through control of DivK phosphorylation status and cellular distribution, which in turn regulates CtrA, a transcriptional regulator of the minB operon. The asymmetrical localization of this protein is probably required for cells to enter a new division cycle. This chain is Cell-division control histidine kinase PdhS (pdhS), found in Brucella canis (strain ATCC 23365 / NCTC 10854 / RM-666).